The primary structure comprises 457 residues: tRNA-2-methylthio-N(6)-dimethylallyladenosine synthase (457 aa).

The MTTase N-terminal domain occupies 3-120 (KKVYVKTFGC…LPQMIDKRRE (118 aa)). [4Fe-4S] cluster contacts are provided by C12, C49, C83, C157, C161, and C164. The region spanning 143–377 (RVDGPSAFVS…QATIEENVQR (235 aa)) is the Radical SAM core domain. Residues 380–447 (DSMVGKIERI…PHSLRGELVL (68 aa)) form the TRAM domain.

It belongs to the methylthiotransferase family. MiaB subfamily. As to quaternary structure, monomer. Requires [4Fe-4S] cluster as cofactor.

The protein localises to the cytoplasm. It catalyses the reaction N(6)-dimethylallyladenosine(37) in tRNA + (sulfur carrier)-SH + AH2 + 2 S-adenosyl-L-methionine = 2-methylsulfanyl-N(6)-dimethylallyladenosine(37) in tRNA + (sulfur carrier)-H + 5'-deoxyadenosine + L-methionine + A + S-adenosyl-L-homocysteine + 2 H(+). In terms of biological role, catalyzes the methylthiolation of N6-(dimethylallyl)adenosine (i(6)A), leading to the formation of 2-methylthio-N6-(dimethylallyl)adenosine (ms(2)i(6)A) at position 37 in tRNAs that read codons beginning with uridine. In Paraburkholderia phytofirmans (strain DSM 17436 / LMG 22146 / PsJN) (Burkholderia phytofirmans), this protein is tRNA-2-methylthio-N(6)-dimethylallyladenosine synthase.